Reading from the N-terminus, the 310-residue chain is tRNA uridine(34) hydroxylase (310 aa).

One can recognise a Rhodanese domain in the interval serine 124 to serine 218. The active-site Cysteine persulfide intermediate is cysteine 178.

It belongs to the TrhO family.

It catalyses the reaction uridine(34) in tRNA + AH2 + O2 = 5-hydroxyuridine(34) in tRNA + A + H2O. Functionally, catalyzes oxygen-dependent 5-hydroxyuridine (ho5U) modification at position 34 in tRNAs. This chain is tRNA uridine(34) hydroxylase, found in Pseudomonas putida (strain ATCC 700007 / DSM 6899 / JCM 31910 / BCRC 17059 / LMG 24140 / F1).